Consider the following 108-residue polypeptide: uncharacterized protein (108 aa).

Residues 64–84 (LFIIYYYYYLLICLSPHFFPI) traverse the membrane as a helical segment.

It localises to the membrane. This is an uncharacterized protein from Schizosaccharomyces pombe (strain 972 / ATCC 24843) (Fission yeast).